We begin with the raw amino-acid sequence, 21 residues long: Peptide PGLa-R6 (21 aa).

Leu-21 is subject to Leucine amide.

In terms of tissue distribution, expressed by the skin glands.

Its subcellular location is the secreted. Antimicrobial peptide. The chain is Peptide PGLa-R6 from Xenopus ruwenzoriensis (Uganda clawed frog).